The following is an 874-amino-acid chain: Bifunctional uridylyltransferase/uridylyl-removing enzyme (874 aa).

The segment at 1–332 (MTLQSPLTFR…NGGASEDAEI (332 aa)) is uridylyltransferase. Residues 333–692 (IDEDFQRRGA…ISKKATRGGT (360 aa)) are uridylyl-removing. The HD domain occupies 451–573 (VDEHSIRLLK…VRDEEYLEYL (123 aa)). ACT domains follow at residues 693–777 (EVFV…RTPN) and 800–874 (LMEF…SVSA).

It belongs to the GlnD family. The cofactor is Mg(2+).

It carries out the reaction [protein-PII]-L-tyrosine + UTP = [protein-PII]-uridylyl-L-tyrosine + diphosphate. The enzyme catalyses [protein-PII]-uridylyl-L-tyrosine + H2O = [protein-PII]-L-tyrosine + UMP + H(+). With respect to regulation, uridylyltransferase (UTase) activity is inhibited by glutamine, while glutamine activates uridylyl-removing (UR) activity. Functionally, modifies, by uridylylation and deuridylylation, the PII regulatory proteins (GlnB and homologs), in response to the nitrogen status of the cell that GlnD senses through the glutamine level. Under low glutamine levels, catalyzes the conversion of the PII proteins and UTP to PII-UMP and PPi, while under higher glutamine levels, GlnD hydrolyzes PII-UMP to PII and UMP (deuridylylation). Thus, controls uridylylation state and activity of the PII proteins, and plays an important role in the regulation of nitrogen assimilation and metabolism. The sequence is that of Bifunctional uridylyltransferase/uridylyl-removing enzyme from Vibrio campbellii (strain ATCC BAA-1116).